The following is a 346-amino-acid chain: Phenylalanine--tRNA ligase alpha subunit (346 aa).

Glutamate 260 contributes to the Mg(2+) binding site.

This sequence belongs to the class-II aminoacyl-tRNA synthetase family. Phe-tRNA synthetase alpha subunit type 1 subfamily. In terms of assembly, tetramer of two alpha and two beta subunits. It depends on Mg(2+) as a cofactor.

The protein localises to the cytoplasm. It carries out the reaction tRNA(Phe) + L-phenylalanine + ATP = L-phenylalanyl-tRNA(Phe) + AMP + diphosphate + H(+). The chain is Phenylalanine--tRNA ligase alpha subunit from Herpetosiphon aurantiacus (strain ATCC 23779 / DSM 785 / 114-95).